Consider the following 566-residue polypeptide: MPYLLLFAMLFALNTPLAWAASCPDWTPQKAEAEAAQLQATLTGWDEHYHRQGIALVADELYDQSRQRLVHLQQCFGLAPSPSPLTSARGPLPHPVPHTGVDKLADRQAVARWMAGKTGVWVQPKFDGVAASLIYRQGQLVQLISRGDGLQGHDWSRHIPQLGAVTRQLPQAIDLHLQGELYLRLNEHVQAKAGSANARGTVAGLLARKQLTREQGNTIGLFVWGWPHGPERQADRLAQLAQLGFPDSQHYSIAVDTLEDAARWREHWYRSPLPFASDGVILRLGSRPPAERWQAKAPYWIAAWKYPYVQALAEVRDVRFRVGRTGRITPIAHVQPVTLDDRRITQVSLGSLARWQALDIRPGDQVAISLAGLTIPRLEHVVHRAVERQPLGAPAPGRHHALSCWQPSEGCEEQFIARLTWLSGKQGLALPRTGPGTWRRLVDAGLVTSMTDWLQLDAERLQQVPGISSLTAAQLLGSFDQARSRPFDQWLRGLGAPIGKHLQLTGGWQEMASRSAGQWQTVPDIGVKRSRQLVGFFAAAEVQAIATRLAESGIEGFSPPPERIEQ.

Lys125 serves as the catalytic N6-AMP-lysine intermediate.

The protein belongs to the NAD-dependent DNA ligase family. LigB subfamily.

It carries out the reaction NAD(+) + (deoxyribonucleotide)n-3'-hydroxyl + 5'-phospho-(deoxyribonucleotide)m = (deoxyribonucleotide)n+m + AMP + beta-nicotinamide D-nucleotide.. Functionally, catalyzes the formation of phosphodiester linkages between 5'-phosphoryl and 3'-hydroxyl groups in double-stranded DNA using NAD as a coenzyme and as the energy source for the reaction. In Pseudomonas putida (strain GB-1), this protein is DNA ligase B.